A 1925-amino-acid polypeptide reads, in one-letter code: MANLKPNTLHVDNLSPRQRSLSSGLSSACSSGSVSPVPIIPIISISRDGEESETESEIEPEPARIFHRRMSTHSKRNNNLSAIIREGYLMKHTWSFQRWRRRYFRLKRSYLYYAKDAKCDVFDEIDLSELCYFECSIKNVNHSFQIITPTRSLVLCADSRREMEDWLGSLKTATAPQRPRGDSFLIDQHDILSNHHHWYATSHARPTYCNVCRDALSGVTSHGLSCEVCKCKVHKRCAAKAIANCKWTTLATVGKDIIEQPDGSLIMPHQWMEGNLPVSAVCAVCKKTCGSVLRLQDWRCLWCRDTVHVACRPQMPIVCPIGPAKLSVVPPTSVHSISTDDAWDVVSPKGNFSPLLVFVNSKSGDNQGVKFLRRFKQLLNPAQVFDLISTGPSLGLRLFRHFEMFRILVCSGDGSVGWVLSEIDRFNMHKQCQVAVMPLGTGNDLARVLGWGSSCDDDTHLPQILERYESASTKMLDRWSIMVFEKAITVPKMPKMSITTEQEALLTGMVTSANHHLRFIVETNDTQTLISSTRSLCDTVDELVSRICEHHKDDEQLAMKCDILRQKLTMLLDALQEEELGTHSGDDLVATIRSLISRSGPLTTARPSFLNPNISIEKTEKDNINSKERRNSRSLRSSEKEALQCRANSVKRAIYNVVEHSEPGRPKRYQRKLSITPFEALKIPITNSGDSTPCGSPLPIIPPINIISPTMETSRLTCISPLPDTRRDSVDENFFNSINLPAPRQFADSRRSSGVPEVIQEMEEGASGETVYRVGRLSLSGGANIDDAGNRLSPSSEAGENTPTERKVDFLRVPIMTSEPIVDPLSNYRPIEVFERTYYMAREMDKDKERTASGQVESEKEEADVNEKSEPQEPHRALVHTCNLQVPGIVVTPQSQNVYTSENFTIIDTDAQTNTEQSSSEDLGGEASDVLSAISNEECSVASEIFDKPESGHSLGDIIQNLDANNFTHIDSPETSDETEPMPGESLMDDISSVLGHDITNALQDNTITDDTTTLCSEHAGPTKPPRKKSLSALVQSKTHPRRRNSSPPRKAGLARMDSDDNPQQFGFENIVFEIDNRCDDQKIREPPRYCSLAQFVEGNDIARQSFKQLMLDRNSGDNHNDNGKNEEADTPTNSAPTRTYRNLTTTTTSDELETAIKIEINNATTNTTTSTSSSISTTTTTSTTSTVKPLESAMASSTSPTKKSGHGQEISVVVRPPTPLRGDSVKPTASSASSASLLATSSSLLGVRTLNSSEIRRHSSHAPSLAVRDYDKDKDRRHSGFNPNFLTLDPEHARFLSSSPAASRRISCGSLFKKRNQKLNVKRTYGLFSVRFFVVAEPDIRLATLALIRPLIPLPNEALPNLQTLKGSKSSLFMGSTLFGFEHFSAGDKDEKPGKDKERTPTEETNRKLPIINPIVRLPNWPNLANGTGFISKCLMANADTLCAAVSPLMDPDETLLAGYHEKCVMNNYFGIGIDAKISLDFHNKREEHPEKCRSRARNYMWYGVLGSKQLLQKTCKNLEQRVQLECDGQRIPLPELQGIVILNIPSFMGGTNFWGNSSKKEDIFLPPSFDDRVLEVVAVFGSVQMAASRLINLQHHRIAQCQSVQINILGDEEIPIQVDGEAWLQPPGMIRILHKNRVQMLCRNRSLEVSLKTWQEKQRQHSISIQRDTSSTASEHAVSTDEVISERECYVLLNFIEAVSSLVKWVKFLIISHPALQHDLYEVACRASEALESIHPQGKLLEGPSLRTKLVEVIDSSRQLYDDACTLLRDRGHSLILREDLETKLSAALANMEMELKKCSVQKCIDGKLRAYFNVLAPNEEPDGRRKSRPFWVRLRSGSTAGQQQFKPPITNTREAANNWSVNEVVTWLETMQLSEYVDSFLKNDIRGKELLTLGRRDLKDLGVVKVGHVKRILQAIKDLSEN.

The region spanning 82 to 175 is the PH domain; it reads AIIREGYLMK…WLGSLKTATA (94 aa). Phorbol-ester/DAG-type zinc fingers lie at residues 195-245 and 268-319; these read HHHW…IANC and PHQW…PIVC. Residues 350-486 enclose the DAGKc domain; sequence GNFSPLLVFV…DRWSIMVFEK (137 aa). Disordered stretches follow at residues 620-641, 783-805, 847-872, 1013-1065, 1113-1141, 1167-1234, 1256-1276, and 1385-1405; these read EKDN…SEKE, ANID…TPTE, DKER…SEPQ, TTLC…NPQQ, DRNS…TRTY, NTTT…SSAS, IRRH…KDKD, and FSAG…PTEE. Over residues 792-802 the composition is skewed to polar residues; it reads LSPSSEAGENT. Residues 863–872 show a composition bias toward basic and acidic residues; the sequence is ADVNEKSEPQ. Residues 1115–1128 show a composition bias toward basic and acidic residues; it reads NSGDNHNDNGKNEE. The segment covering 1167–1187 has biased composition (low complexity); the sequence is NTTTSTSSSISTTTTTSTTST. Over residues 1386–1405 the composition is skewed to basic and acidic residues; sequence SAGDKDEKPGKDKERTPTEE. An SAM domain is found at 1862–1925; that stretch reads WSVNEVVTWL…LQAIKDLSEN (64 aa).

This sequence belongs to the eukaryotic diacylglycerol kinase family.

It is found in the cytoplasm. The catalysed reaction is a 1,2-diacyl-sn-glycerol + ATP = a 1,2-diacyl-sn-glycero-3-phosphate + ADP + H(+). In terms of biological role, phosphorylates diacylglycerol (DAG) to generate phosphatidic acid (PA). This chain is Diacylglycerol kinase eta, found in Drosophila mojavensis (Fruit fly).